The sequence spans 192 residues: Elongation factor P (192 aa).

Belongs to the elongation factor P family.

The protein resides in the cytoplasm. Its pathway is protein biosynthesis; polypeptide chain elongation. Its function is as follows. Involved in peptide bond synthesis. Stimulates efficient translation and peptide-bond synthesis on native or reconstituted 70S ribosomes in vitro. Probably functions indirectly by altering the affinity of the ribosome for aminoacyl-tRNA, thus increasing their reactivity as acceptors for peptidyl transferase. This chain is Elongation factor P, found in Borrelia garinii subsp. bavariensis (strain ATCC BAA-2496 / DSM 23469 / PBi) (Borreliella bavariensis).